The primary structure comprises 404 residues: Probable tRNA sulfurtransferase (404 aa).

Residues 60 to 165 (QPVAESLKQI…EEAAYISYET (106 aa)) enclose the THUMP domain. ATP contacts are provided by residues 183–184 (ML), 208–209 (HF), R265, G287, and Q296.

This sequence belongs to the ThiI family.

It is found in the cytoplasm. It catalyses the reaction [ThiI sulfur-carrier protein]-S-sulfanyl-L-cysteine + a uridine in tRNA + 2 reduced [2Fe-2S]-[ferredoxin] + ATP + H(+) = [ThiI sulfur-carrier protein]-L-cysteine + a 4-thiouridine in tRNA + 2 oxidized [2Fe-2S]-[ferredoxin] + AMP + diphosphate. It carries out the reaction [ThiS sulfur-carrier protein]-C-terminal Gly-Gly-AMP + S-sulfanyl-L-cysteinyl-[cysteine desulfurase] + AH2 = [ThiS sulfur-carrier protein]-C-terminal-Gly-aminoethanethioate + L-cysteinyl-[cysteine desulfurase] + A + AMP + 2 H(+). It participates in cofactor biosynthesis; thiamine diphosphate biosynthesis. In terms of biological role, catalyzes the ATP-dependent transfer of a sulfur to tRNA to produce 4-thiouridine in position 8 of tRNAs, which functions as a near-UV photosensor. Also catalyzes the transfer of sulfur to the sulfur carrier protein ThiS, forming ThiS-thiocarboxylate. This is a step in the synthesis of thiazole, in the thiamine biosynthesis pathway. The sulfur is donated as persulfide by IscS. The sequence is that of Probable tRNA sulfurtransferase from Streptococcus gordonii (strain Challis / ATCC 35105 / BCRC 15272 / CH1 / DL1 / V288).